A 458-amino-acid chain; its full sequence is UDP-N-acetylmuramate--L-alanine ligase (458 aa).

112 to 118 is a binding site for ATP; that stretch reads GTHGKTT.

It belongs to the MurCDEF family.

It is found in the cytoplasm. The catalysed reaction is UDP-N-acetyl-alpha-D-muramate + L-alanine + ATP = UDP-N-acetyl-alpha-D-muramoyl-L-alanine + ADP + phosphate + H(+). It functions in the pathway cell wall biogenesis; peptidoglycan biosynthesis. Its function is as follows. Cell wall formation. In Geotalea daltonii (strain DSM 22248 / JCM 15807 / FRC-32) (Geobacter daltonii), this protein is UDP-N-acetylmuramate--L-alanine ligase.